Consider the following 174-residue polypeptide: Heat shock protein 22 (174 aa).

The region spanning 44-154 (QIARWQEQEF…TLKEREVTIE (111 aa)) is the sHSP domain. Phosphothreonine is present on T152. Residues 152–174 (TIEQTGEPAKKSAEEPNDKAASQ) form a disordered region. A compositionally biased stretch (basic and acidic residues) spans 159 to 174 (PAKKSAEEPNDKAASQ).

The protein belongs to the small heat shock protein (HSP20) family.

This chain is Heat shock protein 22 (Hsp22), found in Drosophila melanogaster (Fruit fly).